A 233-amino-acid polypeptide reads, in one-letter code: Pyridoxal phosphate homeostasis protein (233 aa).

The residue at position 35 (K35) is an N6-(pyridoxal phosphate)lysine.

The protein belongs to the pyridoxal phosphate-binding protein YggS/PROSC family.

Its function is as follows. Pyridoxal 5'-phosphate (PLP)-binding protein, which is involved in PLP homeostasis. The protein is Pyridoxal phosphate homeostasis protein of Pasteurella multocida (strain Pm70).